Consider the following 348-residue polypeptide: Isopentenyl-diphosphate delta-isomerase (348 aa).

11–12 is a substrate binding site; it reads RK. Residues 70–72, Ser100, and Asn131 contribute to the FMN site; that span reads AMT. 100–102 serves as a coordination point for substrate; it reads SQR. Gln165 provides a ligand contact to substrate. Glu166 serves as a coordination point for Mg(2+). FMN contacts are provided by residues Lys197, Thr231, 278–280, and 299–300; these read GIR and AR.

Belongs to the IPP isomerase type 2 family. In terms of assembly, homooctamer. Dimer of tetramers. The cofactor is FMN. NADPH serves as cofactor. Requires Mg(2+) as cofactor.

It is found in the cytoplasm. The catalysed reaction is isopentenyl diphosphate = dimethylallyl diphosphate. Its function is as follows. Involved in the biosynthesis of isoprenoids. Catalyzes the 1,3-allylic rearrangement of the homoallylic substrate isopentenyl (IPP) to its allylic isomer, dimethylallyl diphosphate (DMAPP). The polypeptide is Isopentenyl-diphosphate delta-isomerase (Mycobacterium marinum (strain ATCC BAA-535 / M)).